A 555-amino-acid chain; its full sequence is TBCC domain-containing protein 1 (555 aa).

The region spanning 302 to 433 (PEVSPMVIMS…LEDHMAQVGL (132 aa)) is the C-CAP/cofactor C-like domain.

This sequence belongs to the TBCC family.

Its subcellular location is the cytoplasm. It is found in the cytoskeleton. The protein resides in the microtubule organizing center. It localises to the centrosome. The protein localises to the spindle pole. Functionally, may play a role in the regulation of centrosome and Golgi apparatus positioning. The chain is TBCC domain-containing protein 1 (TBCCD1) from Gallus gallus (Chicken).